The primary structure comprises 271 residues: Eukaryotic translation initiation factor 2 subunit beta (271 aa).

Residues 223–247 form a C4-type zinc finger; that stretch reads CLGCQSPDTILSKENRLFFLRCEKC.

This sequence belongs to the eIF-2-beta/eIF-5 family. Eukaryotic translation initiation factor 2 eIF2 is a heterotrimeric complex composed of an alpha, a beta and a gamma subunit.

Its subcellular location is the cytoplasm. It localises to the cytosol. Its function is as follows. Component of the eIF2 complex that functions in the early steps of protein synthesis by forming a ternary complex with GTP and initiator tRNA. This complex binds to a 40S ribosomal subunit, followed by mRNA binding to form a 43S pre-initiation complex (43S PIC). Junction of the 60S ribosomal subunit to form the 80S initiation complex is preceded by hydrolysis of the GTP bound to eIF2 and release of an eIF2-GDP binary complex. In order for eIF2 to recycle and catalyze another round of initiation, the GDP bound to eIF2 must exchange with GTP by way of a reaction catalyzed by eIF2B. The polypeptide is Eukaryotic translation initiation factor 2 subunit beta (Malus domestica (Apple)).